Reading from the N-terminus, the 77-residue chain is MESILNNSVITFVAYVGIISIYLFVIPLILFYWMNNRWNVMGKLERLGVYGLVFLFFPGLILFSPFLNLRLRGNNEG.

2 consecutive transmembrane segments (helical) span residues 12 to 32 (FVAYVGIISIYLFVIPLILFY) and 47 to 67 (LGVYGLVFLFFPGLILFSPFL).

Belongs to the complex I NdhL subunit family. In terms of assembly, NDH-1 can be composed of about 15 different subunits; different subcomplexes with different compositions have been identified which probably have different functions.

The protein localises to the cellular thylakoid membrane. The enzyme catalyses a plastoquinone + NADH + (n+1) H(+)(in) = a plastoquinol + NAD(+) + n H(+)(out). It catalyses the reaction a plastoquinone + NADPH + (n+1) H(+)(in) = a plastoquinol + NADP(+) + n H(+)(out). Functionally, NDH-1 shuttles electrons from an unknown electron donor, via FMN and iron-sulfur (Fe-S) centers, to quinones in the respiratory and/or the photosynthetic chain. The immediate electron acceptor for the enzyme in this species is believed to be plastoquinone. Couples the redox reaction to proton translocation, and thus conserves the redox energy in a proton gradient. Cyanobacterial NDH-1 also plays a role in inorganic carbon-concentration. In Prochlorococcus marinus (strain MIT 9515), this protein is NAD(P)H-quinone oxidoreductase subunit L.